A 624-amino-acid chain; its full sequence is Polycomb group protein EMF2A (624 aa).

The C2H2-type zinc-finger motif lies at 338–359; that stretch reads CPFCLVRCGNFKGLECHMTSSH. The segment at 420 to 445 is disordered; that stretch reads DAHIMESGSPEETQAESEDDVQEENE. A compositionally biased stretch (acidic residues) spans 432–445; sequence TQAESEDDVQEENE. The VEFS-box stretch occupies residues 474 to 609; the sequence is LSANRADPRN…SARTMDTCNR (136 aa).

This sequence belongs to the VEFS (VRN2-EMF2-FIS2-SU(Z)12) family. As to quaternary structure, component of the polycomb repressive complex 2 (PRC2), which methylates 'Lys-27' residues of histone H3 (H3K27me3), leading to transcriptional repression of the affected target gene. Widely expressed. Highly expressed in shoot apical meristem and inflorescence meristem. Expressed in roots, leaves and immature seeds.

In terms of biological role, polycomb group (PcG) protein. PcG proteins act by forming multiprotein complexes, which are required to maintain the transcriptionally repressive state of homeotic genes throughout development. PcG proteins are not required to initiate repression, but to maintain it during later stages of development. They act via the methylation of histones, rendering chromatin heritably changed in its expressibility. This is Polycomb group protein EMF2A from Oryza sativa subsp. japonica (Rice).